A 205-amino-acid chain; its full sequence is Protein phosphatase inhibitor 2 (205 aa).

The disordered stretch occupies residues 1–44 (MAASTASHRPIKGILKNKTSTTSSMVASAEQPRGNVDEELSKKS). The residue at position 2 (Ala-2) is an N-acetylalanine. 2 required for binding PPP1CC regions span residues 12 to 17 (KGILKN) and 43 to 55 (KSQKWDEMNILAT). Residues 17–26 (NKTSTTSSMV) show a composition bias toward polar residues. Residues 35–44 (NVDEELSKKS) are compositionally biased toward basic and acidic residues. Position 44 is a phosphoserine; by ATM (Ser-44). Thr-73 carries the phosphothreonine; by GSK3 modification. Ser-87 bears the Phosphoserine mark. 2 positions are modified to phosphothreonine: Thr-89 and Thr-92. Residues 111-142 (EPKYRIQEQESSGEEDSDLSPEEREKKRQFEM) are disordered. 4 positions are modified to phosphoserine: Ser-121, Ser-122, Ser-127, and Ser-130. Over residues 121-130 (SSGEEDSDLS) the composition is skewed to acidic residues. The span at 131 to 142 (PEEREKKRQFEM) shows a compositional bias: basic and acidic residues. Positions 147–150 (HYNE) are required for binding PPP1CC catalytic center, displacing metal ions and inhibition of PPP1CC catalytic activity. Residues 163 to 205 (KDLHDDDEDEEMLETADGESMNTEESNQGSTPSDQQQNKLRSS) are disordered. The span at 167–179 (DDDEDEEMLETAD) shows a compositional bias: acidic residues. The span at 182-205 (SMNTEESNQGSTPSDQQQNKLRSS) shows a compositional bias: polar residues.

It belongs to the protein phosphatase inhibitor 2 family. In terms of assembly, heterodimer with PP1. Phosphorylation on Thr-73 by GSK3 activates PP1 by dissociating the PP1-PPP1R2 complex. Phosphorylation on Ser-44 by ATM activates PP1 by dissociating the PP1-PPP1R2 complex.

Functionally, inhibitor of protein-phosphatase 1. This chain is Protein phosphatase inhibitor 2 (PPP1R2), found in Homo sapiens (Human).